A 238-amino-acid chain; its full sequence is Large ribosomal subunit protein uL2 (238 aa).

Polar residues predominate over residues 1–11; that stretch reads MGKRLISQNRG. Disordered stretches follow at residues 1–22 and 202–223; these read MGKRLISQNRGRGTPTYRAPSH and FGGGAWKHPGKPTTVSRNAPPG.

Belongs to the universal ribosomal protein uL2 family. As to quaternary structure, part of the 50S ribosomal subunit. Forms a bridge to the 30S subunit in the 70S ribosome.

In terms of biological role, one of the primary rRNA binding proteins. Required for association of the 30S and 50S subunits to form the 70S ribosome, for tRNA binding and peptide bond formation. It has been suggested to have peptidyltransferase activity; this is somewhat controversial. Makes several contacts with the 16S rRNA in the 70S ribosome. The sequence is that of Large ribosomal subunit protein uL2 from Methanosarcina acetivorans (strain ATCC 35395 / DSM 2834 / JCM 12185 / C2A).